The primary structure comprises 155 residues: Small ribosomal subunit protein uS7c (155 aa).

The protein belongs to the universal ribosomal protein uS7 family. As to quaternary structure, part of the 30S ribosomal subunit.

Its subcellular location is the plastid. It localises to the chloroplast. In terms of biological role, one of the primary rRNA binding proteins, it binds directly to 16S rRNA where it nucleates assembly of the head domain of the 30S subunit. This chain is Small ribosomal subunit protein uS7c (rps7), found in Metasequoia glyptostroboides (Dawn redwood).